Consider the following 175-residue polypeptide: Disulfide bond formation protein B (175 aa).

Topologically, residues 1-13 are cytoplasmic; the sequence is MVSNWLDAAPRRV. The chain crosses the membrane as a helical span at residues 14–30; that stretch reads LALISAACIAMLAFGMY. Residues 31-48 are Periplasmic-facing; that stretch reads LQHVVGLEPCPMCIVQRY. Cys-40 and Cys-43 form a disulfide bridge. A helical transmembrane segment spans residues 49–65; that stretch reads ALIGVAVFTGLGSLRGG. Residues 66-70 are Cytoplasmic-facing; it reads RGWWM. The chain crosses the membrane as a helical span at residues 71-88; it reads TWGVLALLLSGFGAFVAA. Over 89-144 the chain is Periplasmic; sequence RQSWLQWYPPEIATCGRDFYGMIENFPISRAIPMIFRGSGDCAAIDWTFLGGSIAN. Cys-103 and Cys-130 are disulfide-bonded. A helical transmembrane segment spans residues 145–163; that stretch reads WSFVCFVVMALVLLVMLLR. The Cytoplasmic segment spans residues 164–175; that stretch reads APRPARGGFSAA.

Belongs to the DsbB family.

Its subcellular location is the cell inner membrane. Required for disulfide bond formation in some periplasmic proteins. Acts by oxidizing the DsbA protein. The chain is Disulfide bond formation protein B from Paracidovorax citrulli (strain AAC00-1) (Acidovorax citrulli).